We begin with the raw amino-acid sequence, 491 residues long: uncharacterized protein (491 aa).

267–274 lines the ATP pocket; that stretch reads GIQGTGKS.

The protein belongs to the AAA ATPase family. Highly divergent.

It localises to the plastid. It is found in the chloroplast. This is an uncharacterized protein from Gracilaria tenuistipitata var. liui (Red alga).